Here is a 496-residue protein sequence, read N- to C-terminus: Cobyric acid synthase (496 aa).

The region spanning 258–427 is the GATase cobBQ-type domain; that stretch reads TLTVAAIRLP…WHGLLDNDAL (170 aa). The active-site Nucleophile is Cys339. His419 is an active-site residue.

The protein belongs to the CobB/CobQ family. CobQ subfamily.

It functions in the pathway cofactor biosynthesis; adenosylcobalamin biosynthesis. Its function is as follows. Catalyzes amidations at positions B, D, E, and G on adenosylcobyrinic A,C-diamide. NH(2) groups are provided by glutamine, and one molecule of ATP is hydrogenolyzed for each amidation. The protein is Cobyric acid synthase of Mycolicibacterium smegmatis (strain ATCC 700084 / mc(2)155) (Mycobacterium smegmatis).